We begin with the raw amino-acid sequence, 292 residues long: Ribosomal protein L11 methyltransferase (292 aa).

S-adenosyl-L-methionine-binding residues include T144, G165, D187, and N229.

It belongs to the methyltransferase superfamily. PrmA family.

It localises to the cytoplasm. The enzyme catalyses L-lysyl-[protein] + 3 S-adenosyl-L-methionine = N(6),N(6),N(6)-trimethyl-L-lysyl-[protein] + 3 S-adenosyl-L-homocysteine + 3 H(+). Functionally, methylates ribosomal protein L11. This Pseudomonas fluorescens (strain SBW25) protein is Ribosomal protein L11 methyltransferase.